The primary structure comprises 182 residues: Adenine phosphoribosyltransferase (182 aa).

This sequence belongs to the purine/pyrimidine phosphoribosyltransferase family. In terms of assembly, homodimer.

The protein localises to the cytoplasm. It catalyses the reaction AMP + diphosphate = 5-phospho-alpha-D-ribose 1-diphosphate + adenine. It functions in the pathway purine metabolism; AMP biosynthesis via salvage pathway; AMP from adenine: step 1/1. Functionally, catalyzes a salvage reaction resulting in the formation of AMP, that is energically less costly than de novo synthesis. The protein is Adenine phosphoribosyltransferase of Shewanella frigidimarina (strain NCIMB 400).